Reading from the N-terminus, the 144-residue chain is Elicitor-responsive protein 3 (144 aa).

One can recognise a C2 domain in the interval 1 to 103; sequence MVQGTLEVLL…YTEGSIPPTV (103 aa). The Ca(2+) site is built by D20, D26, D73, D75, and D81. The interval 123–144 is disordered; it reads TPEDDRDRGLSEEDIGGWKQSS.

Ca(2+) serves as cofactor.

The sequence is that of Elicitor-responsive protein 3 (ERG3) from Oryza sativa subsp. indica (Rice).